The following is a 576-amino-acid chain: RNA-directed RNA polymerase subunit beta (576 aa).

The 133-residue stretch at 259–391 (RLARDGSLLN…PNRKKTFCDG (133 aa)) folds into the RdRp catalytic domain. Positions 274, 359, and 360 each coordinate Mg(2+).

Homodimer; the replicase complex can dimerize. Part of the viral RNA-dependent RNA polymerase complex, the other subunits are the host ribosomal protein S1, EF-Tu and EF-Ts. S1 is needed for the initiation of genomic RNA (+)-strand replication. Mg(2+) is required as a cofactor.

It catalyses the reaction RNA(n) + a ribonucleoside 5'-triphosphate = RNA(n+1) + diphosphate. This is the catalytic subunit of the viral RNA-dependent RNA polymerase complex. This complex is involved in viral RNA replication that produces (+)-stranded genomes via a complementary, (-)-stranded intermediate. Binds RNA cooperatively with the host ribosomal protein S1. In Enterobacteria phage SP (Bacteriophage SP), this protein is RNA-directed RNA polymerase subunit beta.